The sequence spans 228 residues: 7-cyano-7-deazaguanine synthase (228 aa).

F10–A20 serves as a coordination point for ATP. C190, C205, C208, and C211 together coordinate Zn(2+).

Belongs to the QueC family. It depends on Zn(2+) as a cofactor.

It catalyses the reaction 7-carboxy-7-deazaguanine + NH4(+) + ATP = 7-cyano-7-deazaguanine + ADP + phosphate + H2O + H(+). The protein operates within purine metabolism; 7-cyano-7-deazaguanine biosynthesis. Functionally, catalyzes the ATP-dependent conversion of 7-carboxy-7-deazaguanine (CDG) to 7-cyano-7-deazaguanine (preQ(0)). The chain is 7-cyano-7-deazaguanine synthase from Helicobacter pylori (strain HPAG1).